A 201-amino-acid polypeptide reads, in one-letter code: Inosine triphosphate pyrophosphatase (201 aa).

Residue T13–K18 coordinates ITP. A Mg(2+)-binding site is contributed by E43. ITP is bound by residues K55, D71–T72, K88, F148–D151, K171, and H176–R177.

The protein belongs to the HAM1 NTPase family. In terms of assembly, homodimer. The cofactor is Mg(2+). It depends on Mn(2+) as a cofactor.

The protein localises to the cytoplasm. It catalyses the reaction ITP + H2O = IMP + diphosphate + H(+). The catalysed reaction is dITP + H2O = dIMP + diphosphate + H(+). The enzyme catalyses XTP + H2O = XMP + diphosphate + H(+). It carries out the reaction N(6)-hydroxy-dATP + H2O = N(6)-hydroxy-dAMP + diphosphate + H(+). Pyrophosphatase that hydrolyzes the non-canonical purine nucleotides inosine triphosphate (ITP), deoxyinosine triphosphate (dITP) as well as 2'-deoxy-N-6-hydroxylaminopurine triphosphate (dHAPTP) and xanthosine 5'-triphosphate (XTP) to their respective monophosphate derivatives. The enzyme does not distinguish between the deoxy- and ribose forms. Probably excludes non-canonical purines from RNA and DNA precursor pools, thus preventing their incorporation into RNA and DNA and avoiding chromosomal lesions. In Gallus gallus (Chicken), this protein is Inosine triphosphate pyrophosphatase.